A 166-amino-acid chain; its full sequence is MFPMVTEFMNYGQQTVRAARYIGQGFMITLSHANRLPVTIQYPYEKLITSERFRGRIHFEFDKCIACEVCVRVCPIDLPVVDWKLETDIRKKRLLNYSIDFGICIFCGNCVEYCPTNCLSMTEEYELSTYDRHELNYNQIALGRLPMSIIDDYTIRTIFNLPEIKS.

2 4Fe-4S ferredoxin-type domains span residues 55 to 84 and 95 to 124; these read GRIH…VDWK and LNYS…MTEE. Positions 64, 67, 70, 74, 104, 107, 110, and 114 each coordinate [4Fe-4S] cluster.

Belongs to the complex I 23 kDa subunit family. NDH is composed of at least 16 different subunits, 5 of which are encoded in the nucleus. [4Fe-4S] cluster serves as cofactor.

Its subcellular location is the plastid. It localises to the chloroplast thylakoid membrane. It catalyses the reaction a plastoquinone + NADH + (n+1) H(+)(in) = a plastoquinol + NAD(+) + n H(+)(out). The catalysed reaction is a plastoquinone + NADPH + (n+1) H(+)(in) = a plastoquinol + NADP(+) + n H(+)(out). Functionally, NDH shuttles electrons from NAD(P)H:plastoquinone, via FMN and iron-sulfur (Fe-S) centers, to quinones in the photosynthetic chain and possibly in a chloroplast respiratory chain. The immediate electron acceptor for the enzyme in this species is believed to be plastoquinone. Couples the redox reaction to proton translocation, and thus conserves the redox energy in a proton gradient. In Polymnia canadensis (White-flowered leaf-cup), this protein is NAD(P)H-quinone oxidoreductase subunit I, chloroplastic.